We begin with the raw amino-acid sequence, 108 residues long: MIKAKILKIYLREGDKFEGELMYKHIMKILKREGISGATVYKGICGYGVRGVAEFDIFRLSVNLPVIIECVDIEENINRVLPKLYEVIKNNGLIIITDCHVYKGETYE.

This sequence belongs to the UPF0166 family.

In Methanocaldococcus jannaschii (strain ATCC 43067 / DSM 2661 / JAL-1 / JCM 10045 / NBRC 100440) (Methanococcus jannaschii), this protein is UPF0166 protein MJ1524.